The primary structure comprises 280 residues: 2-dehydro-3-deoxyphosphooctonate aldolase (280 aa).

This sequence belongs to the KdsA family.

It is found in the cytoplasm. It carries out the reaction D-arabinose 5-phosphate + phosphoenolpyruvate + H2O = 3-deoxy-alpha-D-manno-2-octulosonate-8-phosphate + phosphate. The protein operates within carbohydrate biosynthesis; 3-deoxy-D-manno-octulosonate biosynthesis; 3-deoxy-D-manno-octulosonate from D-ribulose 5-phosphate: step 2/3. Its pathway is bacterial outer membrane biogenesis; lipopolysaccharide biosynthesis. The chain is 2-dehydro-3-deoxyphosphooctonate aldolase from Thioalkalivibrio sulfidiphilus (strain HL-EbGR7).